The primary structure comprises 256 residues: 4-hydroxy-tetrahydrodipicolinate reductase (256 aa).

Residue 8–13 (GASGKM) coordinates NAD(+). Lys36 lines the NADP(+) pocket. Residues 87–89 (GTT) and 111–114 (ATNM) contribute to the NAD(+) site. Catalysis depends on His143, which acts as the Proton donor/acceptor. His144 is a binding site for (S)-2,3,4,5-tetrahydrodipicolinate. The active-site Proton donor is Lys147. 153-154 (GT) provides a ligand contact to (S)-2,3,4,5-tetrahydrodipicolinate.

The protein belongs to the DapB family.

It is found in the cytoplasm. The catalysed reaction is (S)-2,3,4,5-tetrahydrodipicolinate + NAD(+) + H2O = (2S,4S)-4-hydroxy-2,3,4,5-tetrahydrodipicolinate + NADH + H(+). It catalyses the reaction (S)-2,3,4,5-tetrahydrodipicolinate + NADP(+) + H2O = (2S,4S)-4-hydroxy-2,3,4,5-tetrahydrodipicolinate + NADPH + H(+). Its pathway is amino-acid biosynthesis; L-lysine biosynthesis via DAP pathway; (S)-tetrahydrodipicolinate from L-aspartate: step 4/4. Its function is as follows. Catalyzes the conversion of 4-hydroxy-tetrahydrodipicolinate (HTPA) to tetrahydrodipicolinate. The chain is 4-hydroxy-tetrahydrodipicolinate reductase from Campylobacter concisus (strain 13826).